A 145-amino-acid polypeptide reads, in one-letter code: D-aminoacyl-tRNA deacylase (145 aa).

The short motif at 137 to 138 (GP) is the Gly-cisPro motif, important for rejection of L-amino acids element.

The protein belongs to the DTD family. In terms of assembly, homodimer.

Its subcellular location is the cytoplasm. It carries out the reaction glycyl-tRNA(Ala) + H2O = tRNA(Ala) + glycine + H(+). It catalyses the reaction a D-aminoacyl-tRNA + H2O = a tRNA + a D-alpha-amino acid + H(+). Functionally, an aminoacyl-tRNA editing enzyme that deacylates mischarged D-aminoacyl-tRNAs. Also deacylates mischarged glycyl-tRNA(Ala), protecting cells against glycine mischarging by AlaRS. Acts via tRNA-based rather than protein-based catalysis; rejects L-amino acids rather than detecting D-amino acids in the active site. By recycling D-aminoacyl-tRNA to D-amino acids and free tRNA molecules, this enzyme counteracts the toxicity associated with the formation of D-aminoacyl-tRNA entities in vivo and helps enforce protein L-homochirality. The sequence is that of D-aminoacyl-tRNA deacylase from Salmonella typhimurium (strain LT2 / SGSC1412 / ATCC 700720).